The chain runs to 237 residues: Platelet-aggregating proteinase PA-BJ (237 aa).

A propeptide spanning residues 1 to 5 is cleaved from the precursor; sequence NSLVI. One can recognise a Peptidase S1 domain in the interval 6-229; it reads VVGGRPCKIN…YLPWIESIIA (224 aa). Cystine bridges form between cysteine 12–cysteine 144, cysteine 31–cysteine 47, cysteine 79–cysteine 236, cysteine 123–cysteine 191, cysteine 155–cysteine 170, and cysteine 181–cysteine 205. The N-linked (GlcNAc...) asparagine glycan is linked to asparagine 25. Serine 28 carries an O-linked (GalNAc...) serine glycan. Active-site charge relay system residues include histidine 46 and aspartate 91. Serine 185 (charge relay system) is an active-site residue.

This sequence belongs to the peptidase S1 family. Snake venom subfamily. As to quaternary structure, monomer. As to expression, expressed by the venom gland.

The protein resides in the secreted. Inhibited by PMSF. The amidolytic activity is also inhibited by benzamidine derivatives. Snake venom serine protease that induces platelet aggregation through activation of protease-activated platelet receptors (PAR1/F2R and PAR4/F2RL3). On F2R, the cleavage occurs at Arg41-Ser42 (like thrombin cleavage), and Arg46-Asn47. In normal condition of hemostasis, the cleavage of the Arg41-Ser42 bond liberates a new N-terminus that functions as an agonist. However after envenomation, the cleavage of Arg46-Asn47 bond degrades this potential agonist. This may explain why the snake protease is less potent than thrombin in causing platelet aggregation and release reaction. On F2RL3, a thrombin-like activity has also been proven by calcium release from lung fibroblasts transfected with this receptor. Possesses amidolytic activities. In Bothrops jararaca (Jararaca), this protein is Platelet-aggregating proteinase PA-BJ.